A 397-amino-acid chain; its full sequence is Cysteine desulfurase IscS (397 aa).

Residues 72-73, Asn-152, Gln-180, and 200-202 contribute to the pyridoxal 5'-phosphate site; these read GS and SAH. At Lys-203 the chain carries N6-(pyridoxal phosphate)lysine. Thr-238 is a binding site for pyridoxal 5'-phosphate. Cys-328 functions as the Cysteine persulfide intermediate in the catalytic mechanism. A [2Fe-2S] cluster-binding site is contributed by Cys-328.

The protein belongs to the class-V pyridoxal-phosphate-dependent aminotransferase family. NifS/IscS subfamily. In terms of assembly, homodimer. Forms a heterotetramer with IscU, interacts with other sulfur acceptors. The cofactor is pyridoxal 5'-phosphate.

It is found in the cytoplasm. The enzyme catalyses (sulfur carrier)-H + L-cysteine = (sulfur carrier)-SH + L-alanine. The protein operates within cofactor biosynthesis; iron-sulfur cluster biosynthesis. Its function is as follows. Master enzyme that delivers sulfur to a number of partners involved in Fe-S cluster assembly, tRNA modification or cofactor biosynthesis. Catalyzes the removal of elemental sulfur atoms from cysteine to produce alanine. Functions as a sulfur delivery protein for Fe-S cluster synthesis onto IscU, an Fe-S scaffold assembly protein, as well as other S acceptor proteins. In Clostridium botulinum (strain Kyoto / Type A2), this protein is Cysteine desulfurase IscS.